A 159-amino-acid chain; its full sequence is UPF0262 protein PHZ_c2197 (159 aa).

This sequence belongs to the UPF0262 family.

This chain is UPF0262 protein PHZ_c2197, found in Phenylobacterium zucineum (strain HLK1).